The sequence spans 96 residues: UPF0251 protein Shal_3723 (96 aa).

This sequence belongs to the UPF0251 family.

In Shewanella halifaxensis (strain HAW-EB4), this protein is UPF0251 protein Shal_3723.